Here is a 30-residue protein sequence, read N- to C-terminus: Photosystem I reaction center subunit XII (30 aa).

Residues 7 to 27 form a helical membrane-spanning segment; that stretch reads VFIGLVIALVPAILAFKLGLS.

The protein belongs to the PsaM family.

It localises to the plastid. The protein resides in the chloroplast thylakoid membrane. The polypeptide is Photosystem I reaction center subunit XII (Cyanidium caldarium (Red alga)).